Here is a 311-residue protein sequence, read N- to C-terminus: MSSQNAKSIGGILETSTVPLVIQPQIVNDPAQNNITLPITLCAVCGDTSNGNHYGVPTCFGCSGFFRRTVRNKLVHGCWNGDGNCVIDKANRNRCKSCRIKKCFKKGMNKNAVQPERTSHSYTVEYVELPSFREYSKGLLPTHSDRLRFQHEHAQHEIDTSSVLVHLKNALQWVQQFSLFAVLSDVEKSQIILTQWPHLLCLALFENSEKIFIDEKFAQLAEKFKSLELSAQDYFLLKGIIIFTETKDGTDLKFDRQLDICIGLLNQLHLESSKSKSGRLLFLLGELKSYSTRQLESLLDLKACEIVISFL.

The segment at residues 39–115 (ITLCAVCGDT…KGMNKNAVQP (77 aa)) is a DNA-binding region (nuclear receptor). 2 NR C4-type zinc fingers span residues 42 to 62 (CAVC…CFGC) and 78 to 98 (CWNG…CKSC). The NR LBD domain occupies 116 to 311 (ERTSHSYTVE…KACEIVISFL (196 aa)).

Belongs to the nuclear hormone receptor family.

Its subcellular location is the nucleus. Orphan nuclear receptor. This is Nuclear hormone receptor family member nhr-111 (nhr-111) from Caenorhabditis elegans.